The chain runs to 230 residues: Glutathione S-transferase 2 (230 aa).

The GST N-terminal domain maps to 2–86; it reads AHFTLYSHAG…YLADKYDTDR (85 aa). Positions 93 to 230 constitute a GST C-terminal domain; it reads DDPEYYKLIQ…EELAKAKEQH (138 aa).

This sequence belongs to the GST superfamily.

It catalyses the reaction RX + glutathione = an S-substituted glutathione + a halide anion + H(+). Involved in the oxidative stress response and detoxification. This Schizosaccharomyces pombe (strain 972 / ATCC 24843) (Fission yeast) protein is Glutathione S-transferase 2 (gst2).